The following is a 101-amino-acid chain: Small ribosomal subunit protein uS10 (101 aa).

Belongs to the universal ribosomal protein uS10 family. Part of the 30S ribosomal subunit.

Functionally, involved in the binding of tRNA to the ribosomes. The sequence is that of Small ribosomal subunit protein uS10 from Corynebacterium efficiens (strain DSM 44549 / YS-314 / AJ 12310 / JCM 11189 / NBRC 100395).